The sequence spans 251 residues: Pyrroloquinoline-quinone synthase (251 aa).

It belongs to the PqqC family.

It carries out the reaction 6-(2-amino-2-carboxyethyl)-7,8-dioxo-1,2,3,4,7,8-hexahydroquinoline-2,4-dicarboxylate + 3 O2 = pyrroloquinoline quinone + 2 H2O2 + 2 H2O + H(+). Its pathway is cofactor biosynthesis; pyrroloquinoline quinone biosynthesis. Ring cyclization and eight-electron oxidation of 3a-(2-amino-2-carboxyethyl)-4,5-dioxo-4,5,6,7,8,9-hexahydroquinoline-7,9-dicarboxylic-acid to PQQ. The protein is Pyrroloquinoline-quinone synthase of Pseudomonas savastanoi pv. phaseolicola (strain 1448A / Race 6) (Pseudomonas syringae pv. phaseolicola (strain 1448A / Race 6)).